The chain runs to 251 residues: Probable-ribose 5-phosphate isomerase (251 aa).

It belongs to the ribose 5-phosphate isomerase family.

It carries out the reaction aldehydo-D-ribose 5-phosphate = D-ribulose 5-phosphate. It participates in carbohydrate degradation; pentose phosphate pathway; D-ribose 5-phosphate from D-ribulose 5-phosphate (non-oxidative stage): step 1/1. The chain is Probable-ribose 5-phosphate isomerase (rpia-1) from Caenorhabditis elegans.